The sequence spans 483 residues: M protein, serotype 6 (483 aa).

The signal sequence occupies residues 1 to 42 (MAKNNTNRHYSLRKLKKGTASVAVALSVIGAGLVVNTNEVSA). Positions 54 to 171 (DKARELLNKY…IGTLKKTLDE (118 aa)) form a coiled coil. A run of 8 repeats spans residues 69–75 (MLQANND), 76–82 (KLTTENN), 83–89 (NLTDQNK), 90–96 (NLTTENK), 97–103 (NLTDQNK), 104–110 (NLTTENK), 111–117 (NLTDQNK), and 118–124 (NLTTENK). Positions 69–138 (MLQANNDKLT…EENRLTTENK (70 aa)) are 10 X 7 AA approximate tandem repeats of [KMNR]-L-[TQ]-[TDA]-[ENQ]-N-[NDK]. Residues 74–87 (NDKLTTENNNLTDQ) show a composition bias toward polar residues. The disordered stretch occupies residues 74–157 (NDKLTTENNN…EEEAANKERE (84 aa)). Residues 88 to 113 (NKNLTTENKNLTDQNKNLTTENKNLT) show a composition bias toward low complexity. 2 stretches are compositionally biased toward basic and acidic residues: residues 122–135 (ENKE…RLTT) and 143–157 (KLSE…KERE). The stretch at 125–131 (ELKAEEN) is one 9-1; approximate repeat. Tandem repeats lie at residues 132-138 (RLTTENK), 157-181 (ENKE…AKEQ), 182-206 (ESKE…AKEQ), 207-231 (ESKE…AKEQ), and 232-256 (ESKE…AREQ). A 4.5 X 25 AA tandem repeats of E-[NS]-K-E-[TA]-I-G-T-L-K-K-[TI]-L-D-E-T-V-K-D-K-I-A-[KR]-E-Q region spans residues 157–269 (ENKEAIGTLK…QDIGALKQEL (113 aa)). Disordered regions lie at residues 255 to 298 (EQKS…EAKK) and 314 to 345 (VKEE…VEKA). The 5-2; truncated repeat unit spans residues 257–269 (KSKQDIGALKQEL). Composition is skewed to basic and acidic residues over residues 268–298 (ELAK…EAKK) and 328–345 (LRRD…VEKA). C repeat units follow at residues 270–304 (AKKD…EKDL) and 312–346 (DKVK…EKAL). The tract at residues 279-347 (SEASRKGLRR…AKKQVEKALE (69 aa)) is binding to CD46. Residues 279-347 (SEASRKGLRR…AKKQVEKALE (69 aa)) form a two directly repeated 27 amino acid blocks separated by 15 amino acids region. Positions 280 to 408 (EASRKGLRRD…LAKLRAGKAS (129 aa)) form a coiled coil. A hydrophilic region spans residues 348–411 (EANSKLAALE…LRAGKASDSQ (64 aa)). 4 D repeats span residues 379–384 (AKLEAE), 385–390 (AKALKE), 393–398 (AKQAEE), and 400–405 (AKLRAG). Residues 400–455 (AKLRAGKASDSQTPDAKPGNKVVPGKGQAPQAGTKPNQNKAPMKETKRQLPSTGET) are disordered. The LPXTG sorting signal motif lies at 449 to 453 (LPSTG). Position 452 is a pentaglycyl murein peptidoglycan amidated threonine (Thr-452). Residues 453–483 (GETANPFFTAAALTVMATAGVAAVVKRKEEN) constitute a propeptide, removed by sortase.

The protein belongs to the M protein family.

It is found in the secreted. The protein resides in the cell wall. In terms of biological role, mediates the attachment of S.pyogenes to skin epithelial cells through the binding of the human membrane cofactor protein CD46. Also binds to the factor H and factor H-like protein 1. These interactions could contribute to the fact that the M6 protein protects the bacterium from the phagocytosis by regulating the complement activation on the bacterial surface. This is M protein, serotype 6 (emm6) from Streptococcus pyogenes.